Here is a 163-residue protein sequence, read N- to C-terminus: Protein-export protein SecB (163 aa).

It belongs to the SecB family. As to quaternary structure, homotetramer, a dimer of dimers. One homotetramer interacts with 1 SecA dimer.

The protein localises to the cytoplasm. One of the proteins required for the normal export of preproteins out of the cell cytoplasm. It is a molecular chaperone that binds to a subset of precursor proteins, maintaining them in a translocation-competent state. It also specifically binds to its receptor SecA. This is Protein-export protein SecB from Caulobacter vibrioides (strain ATCC 19089 / CIP 103742 / CB 15) (Caulobacter crescentus).